We begin with the raw amino-acid sequence, 134 residues long: Proline-rich nuclear receptor coactivator 2 (134 aa).

The disordered stretch occupies residues 1-74; it reads MGGGERYNIP…NNSNWNASLS (74 aa). Polar residues-rich tracts occupy residues 11–24 and 52–61; these read DPQS…QQQH and SAVQNGGKTK. Residues 62-74 are compositionally biased toward low complexity; it reads SLSNNSNWNASLS. The short motif at 94-100 is the SH3-binding element; the sequence is SEPPSPS.

It belongs to the PNRC family. PNRC2 subfamily. Interacts with UPF1/RENT1; preferentially interacts with hyperphosphorylated form. Interacts with DCP1A. Interacts with many nuclear receptors including ESR1, ESRRA, ESRRG, NR3C1/GR, NR5A1, PGR, TR, RAR and RXR.

It localises to the nucleus. The protein resides in the cytoplasm. It is found in the P-body. Functionally, involved in nonsense-mediated mRNA decay (NMD) by acting as a bridge between the mRNA decapping complex and the NMD machinery. May act by targeting the NMD machinery to the P-body and recruiting the decapping machinery to aberrant mRNAs. Required for UPF1/RENT1 localization to the P-body. Plays a role in glucocorticoid receptor-mediated mRNA degradation by interacting with the glucocorticoid receptor NR3C1 in a ligand-dependent manner when it is bound to the 5' UTR of target mRNAs and recruiting the RNA helicase UPF1 and the mRNA-decapping enzyme DCP1A, leading to RNA decay. Also acts as a nuclear receptor coactivator. May play a role in controlling the energy balance between energy storage and energy expenditure. The chain is Proline-rich nuclear receptor coactivator 2 (Pnrc2) from Rattus norvegicus (Rat).